We begin with the raw amino-acid sequence, 554 residues long: MASSQVGDMVNGNAEPTRHLAKFPPSLWGDRFTSFTLDKQLWDKYGNEIEVLKEQVRSMVVAGGRKAAEQINLINVLERLGVSYHFEKEIEEQLEQLFAKFEDNEDYDLFTIALHFRIFRQHGYKMSCDVFNKFRDSNCEFKETVSNDVQGMLSLYEATYLKIRGEGFLDEAHAFTIAQLESLVEGPHLSSDLSEQVMHALKQSIHRGFPRLEAKHFISFYEKDASRNETLLRLAKLDFNQLQLSHREELCHIFRWWKELDLISKVPYARDRAVECFFWSTCAYYEPQHSVGRAGLTKIMLLLSVTDDTYDAYGTYNELKLYTNAVQRWDVSAMDELPDYMKALYRALLNVYDEVERDLAKQGRAYGVHHSKEAFKEIVRSYEIEAEWFKEGYVASFEEYMKNALVTSTGRLHTTSCFMGLEADVATTEAFEWILTKPKMVAASGAIGRLVDDVMSHDEEQERGHVATGLDCYMKQHGVSKQEAIVELYKMIENAWRDINEEMLKPTAISMKLLIRVLNLSRISDVVYKYVDGYTHPEIIKDHVISLFEDPIPM.

Mg(2+) is bound by residues D307 and D311. The short motif at 326–330 is the DDXXD motif element; the sequence is VQRWD. D452, S456, and E460 together coordinate Mg(2+).

It belongs to the terpene synthase family. The cofactor is Mg(2+).

The enzyme catalyses (2E,6E)-farnesyl diphosphate + H2O = valerianol + diphosphate. It functions in the pathway secondary metabolite biosynthesis; terpenoid biosynthesis. Functionally, terpene synthase that catalyzes the biosynthesis of the terpene valerianol, which is a volatile compound of floral scent. The polypeptide is Valerianol synthase TPS1C (Camellia hiemalis (Camellia)).